A 554-amino-acid chain; its full sequence is Valerianol synthase TPS1A (554 aa).

Positions 307 and 311 each coordinate Mg(2+). The DDXXD motif motif lies at 326–330; that stretch reads VQRWD. Mg(2+) contacts are provided by Asp452, Ser456, and Glu460.

This sequence belongs to the terpene synthase family. It depends on Mg(2+) as a cofactor. As to expression, expressed in flowers.

It carries out the reaction (2E,6E)-farnesyl diphosphate + H2O = valerianol + diphosphate. It functions in the pathway secondary metabolite biosynthesis; terpenoid biosynthesis. Terpene synthase that catalyzes the biosynthesis of the terpene valerianol, which is a volatile compound of floral scent. The protein is Valerianol synthase TPS1A of Camellia hiemalis (Camellia).